The sequence spans 424 residues: Histidine--tRNA ligase (424 aa).

This sequence belongs to the class-II aminoacyl-tRNA synthetase family. As to quaternary structure, homodimer.

It localises to the cytoplasm. The catalysed reaction is tRNA(His) + L-histidine + ATP = L-histidyl-tRNA(His) + AMP + diphosphate + H(+). The polypeptide is Histidine--tRNA ligase (Salmonella arizonae (strain ATCC BAA-731 / CDC346-86 / RSK2980)).